The primary structure comprises 687 residues: Elongation factor G (687 aa).

Residues 8-282 form the tr-type G domain; sequence NKFRNIGIMA…AVLAYLPSPL (275 aa). Residues 17–24, 81–85, and 135–138 each bind GTP; these read AHIDAGKT, DTPGH, and NKMD.

It belongs to the TRAFAC class translation factor GTPase superfamily. Classic translation factor GTPase family. EF-G/EF-2 subfamily.

It localises to the cytoplasm. Functionally, catalyzes the GTP-dependent ribosomal translocation step during translation elongation. During this step, the ribosome changes from the pre-translocational (PRE) to the post-translocational (POST) state as the newly formed A-site-bound peptidyl-tRNA and P-site-bound deacylated tRNA move to the P and E sites, respectively. Catalyzes the coordinated movement of the two tRNA molecules, the mRNA and conformational changes in the ribosome. The protein is Elongation factor G of Clostridium novyi (strain NT).